A 529-amino-acid chain; its full sequence is Peptide chain release factor 3 (529 aa).

A tr-type G domain is found at 10–278; it reads ARRRTFAIIS…MFVEFAPGPQ (269 aa). GTP-binding positions include 19–26, 87–91, and 141–144; these read SHPDAGKT, DTPGH, and NKMD.

It belongs to the TRAFAC class translation factor GTPase superfamily. Classic translation factor GTPase family. PrfC subfamily.

It is found in the cytoplasm. Increases the formation of ribosomal termination complexes and stimulates activities of RF-1 and RF-2. It binds guanine nucleotides and has strong preference for UGA stop codons. It may interact directly with the ribosome. The stimulation of RF-1 and RF-2 is significantly reduced by GTP and GDP, but not by GMP. This is Peptide chain release factor 3 from Nitratidesulfovibrio vulgaris (strain DSM 19637 / Miyazaki F) (Desulfovibrio vulgaris).